Consider the following 93-residue polypeptide: Large ribosomal subunit protein uL23 (93 aa).

The protein belongs to the universal ribosomal protein uL23 family. In terms of assembly, part of the 50S ribosomal subunit. Contacts protein L29, and trigger factor when it is bound to the ribosome.

Functionally, one of the early assembly proteins it binds 23S rRNA. One of the proteins that surrounds the polypeptide exit tunnel on the outside of the ribosome. Forms the main docking site for trigger factor binding to the ribosome. The protein is Large ribosomal subunit protein uL23 of Nitratiruptor sp. (strain SB155-2).